The sequence spans 1184 residues: von Willebrand factor A domain-containing protein 3A (1184 aa).

The first 24 residues, methionine 1–glycine 24, serve as a signal peptide directing secretion. The interval glycine 40–glycine 62 is disordered. A compositionally biased stretch (polar residues) spans lysine 50–glycine 62. The stretch at threonine 333 to leucine 357 forms a coiled coil. A VWFA 1 domain is found at arginine 511 to leucine 708. Residue asparagine 709 is glycosylated (N-linked (GlcNAc...) asparagine). The segment at leucine 729–serine 780 is disordered. The segment covering serine 765 to proline 776 has biased composition (basic and acidic residues). Positions lysine 959–phenylalanine 1131 constitute a VWFA 2 domain.

Its subcellular location is the secreted. The polypeptide is von Willebrand factor A domain-containing protein 3A (VWA3A) (Homo sapiens (Human)).